The chain runs to 316 residues: uncharacterized protein (316 aa).

The protein belongs to the chlamydial CPn_0441/CT_007/TC_0275 family.

This is an uncharacterized protein from Chlamydia trachomatis serovar D (strain ATCC VR-885 / DSM 19411 / UW-3/Cx).